Here is a 420-residue protein sequence, read N- to C-terminus: Serine palmitoyltransferase (420 aa).

Residues 1–21 (MKHNLQDNLQGEQMANTNSNG) are compositionally biased toward polar residues. Positions 1 to 25 (MKHNLQDNLQGEQMANTNSNGGKKP) are disordered. Pyridoxal 5'-phosphate contacts are provided by residues 132-133 (GM), His233, Thr261, and Ser263. The residue at position 264 (Lys264) is an N6-(pyridoxal phosphate)lysine.

The protein belongs to the class-II pyridoxal-phosphate-dependent aminotransferase family. Homodimer. The cofactor is pyridoxal 5'-phosphate.

It is found in the cytoplasm. The protein resides in the cell inner membrane. It carries out the reaction L-serine + hexadecanoyl-CoA + H(+) = 3-oxosphinganine + CO2 + CoA. Its pathway is lipid metabolism; sphingolipid metabolism. Its activity is regulated as follows. Significantly inhibited by palmitoyl-CoA concentrations greater than 100 uM. In terms of biological role, catalyzes the condensation of L-serine with palmitoyl-CoA (hexadecanoyl-CoA) to produce 3-oxosphinganine. The chain is Serine palmitoyltransferase from Bacteriovorax stolpii (Bdellovibrio stolpii).